The following is a 478-amino-acid chain: Solute carrier family 49 member 4 (478 aa).

Residues 1–27 (MGSGWSSEEEERQPLLGPGLGPAPGAT) are disordered. Residues 1-51 (MGSGWSSEEEERQPLLGPGLGPAPGATRRGREAAAVLPAAGPSPGRVYGRR) lie on the Cytoplasmic side of the membrane. Residues 15–16 (LL) carry the Di-leucine motif; mediates lysosomal localization motif. The chain crosses the membrane as a helical span at residues 52–72 (WLVLLLFSLLAFAQGLVWNTW). Residues 73-89 (GPIQNSARQAYSFTGWD) are Lumenal-facing. The helical transmembrane segment at 90–110 (IALLVLWGPIGFLPCFAFMWL) threads the bilayer. Residues 111–117 (LDKRGLR) are Cytoplasmic-facing. The helical transmembrane segment at 118–138 (ITVLLTSFLMVLGTGLRCIPV) threads the bilayer. Residues 139–152 (SDLTLKKRLIHGGQ) lie on the Lumenal side of the membrane. The helical transmembrane segment at 153 to 173 (ILNGLAGPTVMNAAPFLSTTW) threads the bilayer. Residues 174–184 (FSADERATATA) lie on the Cytoplasmic side of the membrane. Residues 185 to 205 (IASMLSYLGGACAFLVGPLVV) form a helical membrane-spanning segment. At 206–229 (PAPNGTAPLLTAESSRDHIKDRIE) the chain is on the lumenal side. N-linked (GlcNAc...) asparagine glycosylation is present at Asn-209. A helical transmembrane segment spans residues 230–250 (TVLYAEFGVVCLIFSATLAYF). At 251–281 (PPRPPLPPSVAAASQRLSYRRSFCRLLSNLR) the chain is on the cytoplasmic side. Residues 282-302 (FLMIALAYAIPLGVFAGWSGV) form a helical membrane-spanning segment. The Lumenal segment spans residues 303 to 314 (LDLILTPVHVSQ). The helical transmembrane segment at 315-335 (VDAGWIGFWSIVGGCVVGIAM) threads the bilayer. At 336–347 (ARFADFIRGMLK) the chain is on the cytoplasmic side. A helical membrane pass occupies residues 348 to 368 (LILLLLFSGATLSSTWFTLTC). Residues 369–384 (LNSVTHLPLTTVTLYA) are Lumenal-facing. A helical membrane pass occupies residues 385 to 405 (SCILLGVFLNSSVPIFFELFV). Over 406-414 (ETVYPVPEG) the chain is Cytoplasmic. A helical membrane pass occupies residues 415–435 (ITCGVVTFLSNMFMGVLLFFV). The Lumenal portion of the chain corresponds to 436-442 (TFYHTEL). Residues 443 to 463 (SWFNWCLPGSCLLSLLLILCF) traverse the membrane as a helical segment. Residues 464–478 (RESYDRLYLDVVVSV) are Cytoplasmic-facing.

Belongs to the major facilitator superfamily. Post-translationally, cleaved in lysosomes by cathepsin L between Leu-214 and Ala-261, generating a N-glycosylated N-terminal and a non-glycosylated C-terminal fragment.

The protein resides in the lysosome membrane. The enzyme catalyses pyridoxine(out) + n H(+)(out) = pyridoxine(in) + n H(+)(in). Its function is as follows. Mediates H(+)-dependent pyridoxine transport. The chain is Solute carrier family 49 member 4 (Slc49a4) from Rattus norvegicus (Rat).